The following is a 199-amino-acid chain: uncharacterized protein (199 aa).

The interval 1-41 (MKFKRDENQNSTHHRGNKNNTNNDDDDKEEEEEIINDTTMP) is disordered. The segment covering 23 to 35 (NDDDDKEEEEEII) has biased composition (acidic residues). The next 3 helical transmembrane spans lie at 73-93 (LILDLVGFFTQIIPIFGFAFW), 96-116 (ISTYLIFKVYGSGLHLCVSFL), and 166-186 (IAIAVALIAIYKIISYFSPYL).

The protein resides in the membrane. This is an uncharacterized protein from Dictyostelium discoideum (Social amoeba).